The primary structure comprises 126 residues: Diadenosine hexaphosphate hydrolase (126 aa).

The 121-residue stretch at 1 to 121 (MELGAGGVVF…EDLGLLEVAL (121 aa)) folds into the Nudix hydrolase domain. Residues 21–23 (DRM) and 30–32 (KGH) contribute to the substrate site. The Nudix box signature appears at 31–52 (GHPEPGESLEEAAVREVWEETG). Positions 46 and 50 each coordinate Mg(2+). Substrate-binding positions include 66–68 (YVN), R74, and E112.

It belongs to the Nudix hydrolase family. In terms of assembly, monomer. It depends on Mg(2+) as a cofactor.

It catalyses the reaction P(1),P(6)-bis(5'-adenosyl) hexaphosphate + H2O = 2 ATP + 2 H(+). The enzyme catalyses P(1),P(5)-bis(5'-adenosyl) pentaphosphate + H2O = ADP + ATP + 2 H(+). The catalysed reaction is P(1),P(4)-bis(5'-adenosyl) tetraphosphate + H2O = AMP + ATP + 2 H(+). Its activity is regulated as follows. Strongly inhibited by fluoride ions. Functionally, specifically hydrolyzes (di)adenosine polyphosphates but not ATP or diadenosine triphosphate, generating ATP as the product. Diadenosine hexaphosphate (Ap6A) is the preferred substrate and hydrolysis yields 2 ATP. It is the only enzyme that symmetrically hydrolyzes Ap6A. It also hydrolyzes diadenosine pentaphosphate (Ap5A), diadenosine tetraphosphate (Ap4A) and adenosine tetraphosphate (p4A). This is Diadenosine hexaphosphate hydrolase from Thermus thermophilus.